A 554-amino-acid polypeptide reads, in one-letter code: U4/U6 small nuclear ribonucleoprotein PRP4-like protein (554 aa).

The segment covering 48 to 65 (APIPMMPHPPVARPPTFR) has biased composition (pro residues). Residues 48–99 (APIPMMPHPPVARPPTFRPPVSQNGGVKTSDSDSESDDEHIEISEESKQVRE) are disordered. Residues 88-99 (IEISEESKQVRE) are compositionally biased toward basic and acidic residues. WD repeat units lie at residues 253–292 (GDDR…NTIA), 296–335 (DHKE…LQTF), 337–376 (GHLD…ELLL), 379–418 (GHSR…SILV), 421–460 (GHIK…SLYI), 463–503 (AHAN…LVKS), and 506–545 (GHES…DEDE).

The protein resides in the nucleus speckle. Participates in pre-mRNA splicing. Part of the U4/U5/U6 tri-snRNP complex, one of the building blocks of the spliceosome. Essential for reproduction. In female gametophyte, is necessary for the egg cell and central cell fate determination and hence reproductive success. Involved in a mechanism that prevents accessory cells from adopting gametic cell fate. Modulates egg cell signaling center that regulates the development of all female gametophytic cells. The chain is U4/U6 small nuclear ribonucleoprotein PRP4-like protein from Arabidopsis thaliana (Mouse-ear cress).